Consider the following 746-residue polypeptide: tRNA(Met) cytidine acetyltransferase TmcA (746 aa).

A disordered region spans residues 181 to 200; sequence ARAETGGNPPSPGDSACRTE. Residues Gln-202, 228–237, and Arg-370 each bind ATP; that span reads GRGKSAALGI. An N-acetyltransferase domain is found at 405–617; that stretch reads VAVERLDRDA…VHLPHQLADP (213 aa). Acetyl-CoA contacts are provided by residues 517 to 519, 524 to 530, Glu-557, and Arg-564; these read IAV and QGQGLGT.

It belongs to the RNA cytidine acetyltransferase family. TmcA subfamily.

The protein resides in the cytoplasm. The catalysed reaction is cytidine(34) in elongator tRNA(Met) + acetyl-CoA + ATP + H2O = N(4)-acetylcytidine(34) in elongator tRNA(Met) + ADP + phosphate + CoA + H(+). Its function is as follows. Catalyzes the formation of N(4)-acetylcytidine (ac(4)C) at the wobble position of tRNA(Met), by using acetyl-CoA as an acetyl donor and ATP (or GTP). The sequence is that of tRNA(Met) cytidine acetyltransferase TmcA from Nitrosococcus halophilus (strain Nc4).